The chain runs to 197 residues: UPF0301 protein AnaeK_4073 (197 aa).

The protein belongs to the UPF0301 (AlgH) family.

The sequence is that of UPF0301 protein AnaeK_4073 from Anaeromyxobacter sp. (strain K).